A 554-amino-acid polypeptide reads, in one-letter code: Bifunctional epoxide hydrolase 2 (554 aa).

Residues 1-224 (MALRVAAFDL…KVTGTQFPEA (224 aa)) are phosphatase. Positions 9 and 11 each coordinate Mg(2+). Position 55 is an N6-succinyllysine (K55). Residue 123-124 (TN) participates in phosphate binding. An N6-acetyllysine; alternate modification is found at K176. K176 is subject to N6-succinyllysine; alternate. A Mg(2+)-binding site is contributed by D185. An N6-acetyllysine mark is found at K191 and K215. Residues 233–554 (NDVSHGYVTV…IQNPSVTSKI (322 aa)) are epoxide hydrolase. Residues 257–530 (PAICLCHGFP…CGHWTQIEKP (274 aa)) form the AB hydrolase-1 domain. Catalysis depends on D333, which acts as the Nucleophile. At S368 the chain carries Phosphoserine. Residue Y381 participates in substrate binding. N6-succinyllysine is present on residues K420 and K454. Catalysis depends on Y465, which acts as the Proton donor. K504 is modified (N6-succinyllysine). The S-(15-deoxy-Delta12,14-prostaglandin J2-9-yl)cysteine moiety is linked to residue C521. The active-site Proton acceptor is H523. The Microbody targeting signal motif lies at 552–554 (SKI). Position 553 is an N6-succinyllysine (K553).

It belongs to the AB hydrolase superfamily. Epoxide hydrolase family. As to quaternary structure, homodimer. Mg(2+) serves as cofactor. The covalent modification of cysteine by 15-deoxy-Delta12,14-prostaglandin-J2 is autocatalytic and reversible. It may occur as an alternative to other cysteine modifications, such as S-nitrosylation and S-palmitoylation.

The protein resides in the cytoplasm. The protein localises to the peroxisome. The enzyme catalyses an epoxide + H2O = an ethanediol. It catalyses the reaction (9S,10S)-10-hydroxy-9-(phosphooxy)octadecanoate + H2O = (9S,10S)-9,10-dihydroxyoctadecanoate + phosphate. The catalysed reaction is 8-hydroxy-(11S,12S)-epoxy-(5Z,9E,14Z)-eicosatrienoate + H2O = (8,11R,12S)-trihydroxy-(5Z,9E,14Z)-eicosatrienoate. It carries out the reaction 10-hydroxy-(11S,12S)-epoxy- (5Z,8Z,14Z)-eicosatrienoate + H2O = (10,11S,12R)-trihydroxy-(5Z,8Z,14Z)-eicosatrienoate. The enzyme catalyses 12-phosphooxy-(9Z)-octadecenoate + H2O = 12-hydroxy-(9Z)-octadecenoate + phosphate. It catalyses the reaction 12-phosphooxy-(9E)-octadecenoate + H2O = 12-hydroxy-(9E)-octadecenoate + phosphate. The catalysed reaction is 12-(phosphooxy)octadecanoate + H2O = 12-hydroxyoctadecanoate + phosphate. It carries out the reaction 8,9-epoxy-(5Z,11Z,14Z)-eicosatrienoate + H2O = 8,9-dihydroxy-(5Z,11Z,14Z)-eicosatrienoate. The enzyme catalyses 11,12-epoxy-(5Z,8Z,14Z)-eicosatrienoate + H2O = 11,12-dihydroxy-(5Z,8Z,14Z)-eicosatrienoate. It catalyses the reaction 14,15-epoxy-(5Z,8Z,11Z)-eicosatrienoate + H2O = 14,15-dihydroxy-(5Z,8Z,11Z)-eicosatrienoate. The catalysed reaction is 9,10-epoxy-(12Z)-octadecenoate + H2O = 9,10-dihydroxy-(12Z)-octadecenoate. It carries out the reaction 1-tetradecanoyl-sn-glycerol 3-phosphate + H2O = 1-tetradecanoyl-sn-glycerol + phosphate. The enzyme catalyses 1-octadecanoyl-sn-glycero-3-phosphate + H2O = 1-octadecanoyl-sn-glycerol + phosphate. It catalyses the reaction 1-(5Z,8Z,11Z,14Z-eicosatetraenoyl)-sn-glycero-3-phosphate + H2O = 1-(5Z,8Z,11Z,14Z-eicosatetraenoyl)-sn-glycerol + phosphate. The catalysed reaction is 1-hexadecanoyl-sn-glycero-3-phosphate + H2O = 1-hexadecanoyl-sn-glycerol + phosphate. It carries out the reaction 1-(9Z-octadecenoyl)-sn-glycero-3-phosphate + H2O = 1-(9Z-octadecenoyl)-sn-glycerol + phosphate. The enzyme catalyses (8S,9R)-epoxy-(5Z,11Z,14Z)-eicosatrienoate + H2O = (8S,9S)-dihydroxy-(5Z,11Z,14Z)-eicosatrienoate. It catalyses the reaction (11S,12R)-epoxy-(5Z,8Z,14Z)-eicosatrienoate + H2O = (11R,12R)-dihydroxy-(5Z,8Z,14Z)-eicosatrienoate. The catalysed reaction is (11S,12R)-epoxy-(5Z,8Z,14Z)-eicosatrienoate + H2O = (11S,12S)-dihydroxy-(5Z,8Z,14Z)-eicosatrienoate. It carries out the reaction (14S,15R)-epoxy-(5Z,8Z,11Z)-eicosatrienoate + H2O = (14R,15R)-dihydroxy-(5Z,8Z,11Z)-eicosatrienoate. The enzyme catalyses (14S,15R)-epoxy-(5Z,8Z,11Z)-eicosatrienoate + H2O = (14S,15S)-dihydroxy-(5Z,8Z,11Z)-eicosatrienoate. It catalyses the reaction (11R,12S)-epoxy-(5Z,8Z,14Z)-eicosatrienoate + H2O = (11S,12S)-dihydroxy-(5Z,8Z,14Z)-eicosatrienoate. The catalysed reaction is (11R,12S)-epoxy-(5Z,8Z,14Z)-eicosatrienoate + H2O = (11R,12R)-dihydroxy-(5Z,8Z,14Z)-eicosatrienoate. It carries out the reaction (8S,9R)-epoxy-(5Z,11Z,14Z)-eicosatrienoate + H2O = (8R,9R)-dihydroxy-(5Z,11Z,14Z)-eicosatrienoate. The enzyme catalyses (14R,15S)-epoxy-(5Z,8Z,11Z)-eicosatrienoate + H2O = (14R,15R)-dihydroxy-(5Z,8Z,11Z)-eicosatrienoate. Its activity is regulated as follows. Inhibited by 1-(1-acetylpiperidin-4-yl)-3-(4-(trifl uoromethoxy)phenyl)urea (TPAU), 1-cyclohexyl-3-dodecylurea (CDU), 12-(3-adamantan-1-yl-ureido)-dodecanoic acid (AUDA), 1-((3S, 5S, 7S)-adamantan-1-yl)-3-(5-(2-(2-ethoxyethoxy) ethoxy)pentyl)urea (AEPU), N-adamantyl-N[']-cyclohexyl urea (ACU), 4-(((1S, 4S)-4-(3-((3S, 5S, 7S)-adamantan-1-yl) ureido)cyclohexyl)oxy)benzoic acid (c-AUCB), 4-(((1R, 4R)-4-(3-((3S, 5S, 7S)-adamantan-1-yl)ureido)cyclohexyl)oxy)benzoic acid (t-AUCB), 4-(((1R, 4R)-4-(3-(4(trifluoromethoxy)phenyl)ureido)cyclohexyl)oxy)benzoic acid (t-TAUCB) and to a lesser extent by 8-(3-((3S, 5S, 7S)-adamantan-1-yl)ureido) octanoic acid (AUOA). Phosphatase activity is inhibited by dodecyl-phosphate, phospholipids such as phospho-lysophosphatidic acids and fatty acids such as palmitic acid and lauric acid. Its function is as follows. Bifunctional enzyme. The C-terminal domain has epoxide hydrolase activity and acts on epoxides (alkene oxides, oxiranes) and arene oxides. Plays a role in xenobiotic metabolism by degrading potentially toxic epoxides. Also determines steady-state levels of physiological mediators. The N-terminal domain has lipid phosphatase activity, with the highest activity towards threo-9,10-phosphonooxy-hydroxy-octadecanoic acid, followed by erythro-9,10-phosphonooxy-hydroxy-octadecanoic acid, 12-phosphonooxy-octadec-9Z-enoic acid and 12-phosphonooxy-octadec-9E-enoic acid. Bifunctional enzyme. The C-terminal domain has epoxide hydrolase activity and acts on epoxides (alkene oxides, oxiranes) and arene oxides. Plays a role in xenobiotic metabolism by degrading potentially toxic epoxides. Also determines steady-state levels of physiological mediators. In terms of biological role, bifunctional enzyme. The N-terminal domain has lipid phosphatase activity, with the highest activity towards threo-9,10-phosphonooxy-hydroxy-octadecanoic acid, followed by erythro-9,10-phosphonooxy-hydroxy-octadecanoic acid, 12-phosphonooxy-octadec-9Z-enoic acid and 12-phosphonooxy-octadec-9E-enoic acid. Has phosphatase activity toward lyso-glycerophospholipids with also some lower activity toward lysolipids of sphingolipid and isoprenoid phosphates. This Rattus norvegicus (Rat) protein is Bifunctional epoxide hydrolase 2.